We begin with the raw amino-acid sequence, 539 residues long: Fusion glycoprotein F0 (539 aa).

A signal peptide spans 1–18 (MSWKVVIIFSLLITPQHG). 7 cysteine pairs are disulfide-bonded: C28-C407, C60-C182, C283-C311, C292-C301, C326-C335, C350-C361, and C384-C390. A glycan (N-linked (GlcNAc...) asparagine; by host) is linked at N57. The fusion peptide stretch occupies residues 103 to 127 (FVLGAIALGVATAAAVTAGVAIAKT). N172 carries an N-linked (GlcNAc...) asparagine; by host glycan. The Cell attachment site motif lies at 329-331 (RGD). The N-linked (GlcNAc...) asparagine; by host glycan is linked to N353. A helical membrane pass occupies residues 492-512 (IIVIILIAVLGSSMILVSIFI). A disordered region spans residues 520–539 (PTGAPPELSGVTNNGFIPHS). The segment covering 529–539 (GVTNNGFIPHS) has biased composition (polar residues).

Belongs to the paramyxoviruses fusion glycoprotein family. Homotrimer. Heterodimer with fusion protein F2; disulfide-linked. As a heterodimer with F2, interacts with host heparan sulfate. As a heterodimer with F2, interacts with host integrin ITGAV/ITGB1. Part of a complex composed of F1, F2 and G glycoproteins. As to quaternary structure, homotrimer. Heterodimer with fusion protein F1; disulfide-linked. As a heterodimer with F1, interacts with host heparan sulfate. As a heterodimer with F2, interacts with host integrin ITGAV/ITGB1. Part of a complex composed of F1, F2 and G glycoproteins. The F glycoprotein is synthesized as a F0 inactive precursor that is heavily N-glycosylated and processed.

Its subcellular location is the virion membrane. It is found in the host cell membrane. In terms of biological role, inactive precursor that is cleaved to give rise to the mature F1 and F2 fusion glycoproteins. Its function is as follows. Class I viral fusion protein. Under the current model, the protein has at least 3 conformational states: pre-fusion native state, pre-hairpin intermediate state, and post-fusion hairpin state. During viral and plasma cell membrane fusion, the coiled coil regions assume a trimer-of-hairpins structure, positioning the fusion peptide in close proximity to the C-terminal region of the ectodomain. The formation of this structure appears to drive apposition and subsequent fusion of viral and cellular membranes leading to delivery of the nucleocapsid into the cytoplasm. This fusion is pH independent and occurs at the plasma or endosomal membrane. The trimer of F1-F2 (F protein) also facilitates the attachment to host cell by binding to host heparan sulfate. Functionally, major determinant of the species specificity of RSV infection. The trimer of F1-F2 (F protein) also facilitates the attachment to host cell by binding to host heparan sulfate. The sequence is that of Fusion glycoprotein F0 (F) from Human metapneumovirus (strain CAN97-83) (HMPV).